The sequence spans 424 residues: MNPDNTIAVITETIPIGMQFDKVYLTTFNMWREILSNTIKTLDISSFYWSLSDEVGTNFGTVILNEIVQLPKRGVRVRVAVNKSNKPLKDVERLQMAGVEVRYIDITNILGGVLHTKFWISDNTHIYLGSANMDWRSLTQVKELGIAIFNNRNLAADLTQIFEVYWYLGVNNLPYNWKNFYPSYYNTDHPLSINVSGVPHSVFIASAPQQLCTMERTNDLTALLSCIGNASKFVYVSVMNFIPIIYSKAGKILFWPYIEDELRRSAIDRQVSVKLLISCWQRSSFIMRNFLRSIAMLKSKNIDIEVKLFIVPDADPPIPYSRVNHAKYMVTDKTAYIGTSNWTGNYFTDICGASINITPDDGLGLRQQLEDIFIRDWNSKYSYELYDTSPTKRCRLLKNMKQCTNDIYCDEIQPEKELPEYSLE.

The protein belongs to the orthopoxvirus OPG042 family.

It localises to the virion. Its function is as follows. DNA nicking enzyme that cleaves extruded cruciform DNA at its tip. Probably nicks viral hairpins. The protein is Virion nicking-joining enzyme (OPG042) of Cynomys gunnisoni (Gunnison's prairie dog).